The following is a 144-amino-acid chain: Large ribosomal subunit protein uL15 (144 aa).

The disordered stretch occupies residues 1–56 (MELNNLKPAAGAKHAKRRVGRGIGSGLGKTAGRGHKGQKSRSGGFHKVGFEGGQMP). Residues 21-31 (RGIGSGLGKTA) are compositionally biased toward gly residues.

It belongs to the universal ribosomal protein uL15 family. As to quaternary structure, part of the 50S ribosomal subunit.

Functionally, binds to the 23S rRNA. The sequence is that of Large ribosomal subunit protein uL15 from Burkholderia cenocepacia (strain HI2424).